Here is a 157-residue protein sequence, read N- to C-terminus: MIKLKNFAELNSQEIKLIFKWRNHPDISQFMKTKHIDFEEHLRFIRNLHQDSNKKYFLVFQDEQIIGVIDFVNITTKSCEFGLYAIPDLKGVGQVLMNEIKKYAFEILKVDTLKAYVFKDNHKALKLYQQNHFTIYDEDKDFYYVCLKQSHCKALPS.

The 148-residue stretch at lysine 5–cysteine 152 folds into the N-acetyltransferase domain.

Functionally, catalyzes the third step in the biosynthesis of pseudaminic acid, a sialic-acid-like sugar that is used to modify flagellin. Mediates N-4 acetylation of UDP-4-amino-4,6-dideoxy-beta-L-AltNAc to form UDP-2,4-diacetamido-2,4,6-trideoxy-beta-L-altropyranose. The chain is Acetyltransferase PseH (pseH) from Campylobacter jejuni subsp. jejuni serotype O:2 (strain ATCC 700819 / NCTC 11168).